A 495-amino-acid polypeptide reads, in one-letter code: Genome polyprotein (495 aa).

Residues 1–445 (MRCIGISNRD…LNQVFGTIYG (445 aa)) lie on the Extracellular side of the membrane. Cystine bridges form between cysteine 3–cysteine 30, cysteine 60–cysteine 121, cysteine 74–cysteine 105, and cysteine 92–cysteine 116. An N-linked (GlcNAc...) asparagine; by host glycan is attached at asparagine 67. The segment at 98-111 (DRGWGNGCGLFGKG) is fusion peptide. A glycan (N-linked (GlcNAc...) asparagine; by host) is linked at asparagine 153. Intrachain disulfides connect cysteine 185-cysteine 285 and cysteine 302-cysteine 333. Residues 446-466 (AAFSGVSWTMKILIGVIITCI) form a helical membrane-spanning segment. Topologically, residues 467-472 (GMNSRS) are cytoplasmic. A helical transmembrane segment spans residues 473-493 (TSLSVSLVLVGVVTLYLGGMV). Residues 494–495 (HA) are Extracellular-facing.

In terms of assembly, homodimer; in the endoplasmic reticulum and Golgi. Interacts with protein prM. Interacts with non-structural protein 1. N-glycosylated. In terms of processing, specific enzymatic cleavages in vivo yield mature proteins. Cleavages in the lumen of endoplasmic reticulum are performed by host signal peptidase, wereas cleavages in the cytoplasmic side are performed by serine protease NS3. Signal cleavage at the 2K-4B site requires a prior NS3 protease-mediated cleavage at the 4A-2K site.

The protein resides in the virion membrane. It localises to the host endoplasmic reticulum membrane. Its function is as follows. Binds to host cell surface receptor and mediates fusion between viral and cellular membranes. Envelope protein is synthesized in the endoplasmic reticulum in the form of heterodimer with protein prM. They play a role in virion budding in the ER, and the newly formed immature particle is covered with 60 spikes composed of heterodimer between precursor prM and envelope protein E. The virion is transported to the Golgi apparatus where the low pH causes dissociation of PrM-E heterodimers and formation of E homodimers. prM-E cleavage is inefficient, and many virions are only partially matured. These uncleaved prM would play a role in immune evasion. The sequence is that of Genome polyprotein from Aedes aegypti (Yellowfever mosquito).